The primary structure comprises 185 residues: uncharacterized protein (185 aa).

A chloroplast-targeting transit peptide spans 1–56; that stretch reads MSSFTIPSPSSFSLSNSYNQTSPHSFTLRNSRSNFEFHRLRLDVESRRRSTSLRSN. Residues 48 to 67 are disordered; the sequence is RRSTSLRSNCSTKGTDSGEN. Polar residues predominate over residues 52–64; the sequence is SLRSNCSTKGTDS. A coiled-coil region spans residues 105-138; it reads QAEQQKQVQEIQEEVLERAKKAKERAARETMEEQ.

It is found in the plastid. Its subcellular location is the chloroplast. It localises to the plastoglobule. This is an uncharacterized protein from Arabidopsis thaliana (Mouse-ear cress).